The chain runs to 486 residues: Pentatricopeptide repeat-containing protein At3g06430, chloroplastic (486 aa).

The N-terminal 36 residues, Met1–Leu36, are a transit peptide targeting the chloroplast. PPR repeat units lie at residues Lys123–Pro157, Thr158–Phe188, Asp194–Pro228, Asn229–Pro264, Asp265–Pro299, Glu300–Trp334, Thr335–Ala369, Asp370–Glu404, Asn405–Cys439, and Asp440–Leu470.

Belongs to the PPR family. P subfamily.

The protein localises to the plastid. It is found in the chloroplast. The chain is Pentatricopeptide repeat-containing protein At3g06430, chloroplastic (EMB2750) from Arabidopsis thaliana (Mouse-ear cress).